The sequence spans 277 residues: Large ribosomal subunit protein uL2 (277 aa).

A disordered region spans residues L215–R263.

Belongs to the universal ribosomal protein uL2 family. Part of the 50S ribosomal subunit. Forms a bridge to the 30S subunit in the 70S ribosome.

One of the primary rRNA binding proteins. Required for association of the 30S and 50S subunits to form the 70S ribosome, for tRNA binding and peptide bond formation. It has been suggested to have peptidyltransferase activity; this is somewhat controversial. Makes several contacts with the 16S rRNA in the 70S ribosome. This Deinococcus geothermalis (strain DSM 11300 / CIP 105573 / AG-3a) protein is Large ribosomal subunit protein uL2.